The following is a 297-amino-acid chain: MNLGSLVSETRNPDTLDLDALPTLEMLRRFNEEDKRVAYAVSETLPEVAKAVDAAAAALTRGGRLIYMGAGTSGRLGVLDASECPPTFGVPHGVVVGLIAGGPGALLKAVEGAEDNAQLGEDDLKAIGLNARDMVVGLAASGRTPYVIGGLKYARALGCATAAISCNPGSPIAEAAEIAISPVVGPEALTGSTRLKSGTAQKFVLNMISTGAMVKCGKVYQNLMVDMKATNVKLVDRACRMVMEATGVTREEAEAVLTQTEYEVKPAILMVLTGLDAQAAHARLAAHNGFLRAALQP.

The 164-residue stretch at 55–218 (AAAALTRGGR…STGAMVKCGK (164 aa)) folds into the SIS domain. E83 (proton donor) is an active-site residue. E114 is a catalytic residue.

The protein belongs to the GCKR-like family. MurNAc-6-P etherase subfamily. As to quaternary structure, homodimer.

It carries out the reaction N-acetyl-D-muramate 6-phosphate + H2O = N-acetyl-D-glucosamine 6-phosphate + (R)-lactate. The protein operates within amino-sugar metabolism; 1,6-anhydro-N-acetylmuramate degradation. It participates in amino-sugar metabolism; N-acetylmuramate degradation. It functions in the pathway cell wall biogenesis; peptidoglycan recycling. Its function is as follows. Specifically catalyzes the cleavage of the D-lactyl ether substituent of MurNAc 6-phosphate, producing GlcNAc 6-phosphate and D-lactate. Together with AnmK, is also required for the utilization of anhydro-N-acetylmuramic acid (anhMurNAc) either imported from the medium or derived from its own cell wall murein, and thus plays a role in cell wall recycling. The protein is N-acetylmuramic acid 6-phosphate etherase of Cronobacter sakazakii (strain ATCC BAA-894) (Enterobacter sakazakii).